A 1500-amino-acid polypeptide reads, in one-letter code: ABC transporter G family member 42 (1500 aa).

Residues 26–56 (VDEAFMPQNSGGGGGSRGRRRSGRGGTADDD) form a disordered region. Positions 182–455 (LGLVGVRPGR…FESCGFRCPE (274 aa)) constitute an ABC transporter 1 domain. ATP is bound at residue 215–222 (GPPSSGKT). The region spanning 533–746 (ELLKASFAKE…GYNALAVNEF (214 aa)) is the ABC transmembrane type-2 1 domain. The next 7 membrane-spanning stretches (helical) occupy residues 551–571 (FVYI…STVF), 584–604 (GFVY…NGFA), 639–659 (IPFS…TIGF), 670–690 (LLLV…TAGL), 695–715 (IIAQ…GGFL), 724–744 (WWIW…LAVN), and 783–803 (FWIG…LFTL). The span at 822–834 (TAKEAEGNGDARH) shows a compositional bias: basic and acidic residues. Residues 822 to 850 (TAKEAEGNGDARHTVRNGSTKSNGGNHKE) are disordered. The span at 837–846 (RNGSTKSNGG) shows a compositional bias: polar residues. The region spanning 894 to 1151 (MSFDDVNYYV…KMIEYFEAIP (258 aa)) is the ABC transporter 2 domain. 939–946 (GVSGAGKT) lines the ATP pocket. The ABC transmembrane type-2 2 domain occupies 1224–1438 (GQFRACLWKQ…TVYGLIVTQY (215 aa)). 7 helical membrane-spanning segments follow: residues 1245 to 1265 (LVRF…FWKI), 1277 to 1297 (MVIG…CATV), 1331 to 1351 (IPYV…MMSF), 1358 to 1378 (FFWF…YGMM), 1388 to 1408 (VAAI…GFFI), 1416 to 1436 (WWIW…LIVT), and 1472 to 1492 (VVAP…AICI).

The protein belongs to the ABC transporter superfamily. ABCG family. PDR (TC 3.A.1.205) subfamily.

The protein resides in the membrane. Functionally, may be a general defense protein. This Oryza sativa subsp. japonica (Rice) protein is ABC transporter G family member 42.